A 192-amino-acid chain; its full sequence is Peptidyl-tRNA hydrolase (192 aa).

Y14 serves as a coordination point for tRNA. H19 acts as the Proton acceptor in catalysis. Residues Y64, N66, and N112 each contribute to the tRNA site.

This sequence belongs to the PTH family. In terms of assembly, monomer.

The protein localises to the cytoplasm. The catalysed reaction is an N-acyl-L-alpha-aminoacyl-tRNA + H2O = an N-acyl-L-amino acid + a tRNA + H(+). Hydrolyzes ribosome-free peptidyl-tRNAs (with 1 or more amino acids incorporated), which drop off the ribosome during protein synthesis, or as a result of ribosome stalling. Its function is as follows. Catalyzes the release of premature peptidyl moieties from peptidyl-tRNA molecules trapped in stalled 50S ribosomal subunits, and thus maintains levels of free tRNAs and 50S ribosomes. In Anaeromyxobacter dehalogenans (strain 2CP-C), this protein is Peptidyl-tRNA hydrolase.